The chain runs to 218 residues: Capsid protein (218 aa).

At methionine 1 the chain carries N-acetylmethionine; by host. The interval 1 to 30 is disordered; sequence MDKSESTSAGRNRRRRPRRGSRSAPSSSDA. The segment covering 11–21 has biased composition (basic residues); the sequence is RNRRRRPRRGS.

This sequence belongs to the cucumovirus capsid protein family.

It is found in the virion. Its function is as follows. Capsid protein. Probably binds RNA and plays a role in packaging. This Cucumis sativus (Cucumber) protein is Capsid protein.